The sequence spans 474 residues: Synaptotagmin-17 (474 aa).

Positions 60-117 are disordered; that stretch reads WLMASRSNDKDGDSVHTASDVPLTPRTNSPDGRRSSSDTSKSTYSLTRRISSLDSRRP. Over residues 96–117 the composition is skewed to low complexity; it reads SDTSKSTYSLTRRISSLDSRRP. A phosphoserine mark is found at S118 and S119. C2 domains are found at residues 184 to 310 and 321 to 455; these read QLGM…HWWK and ELGE…EQWH.

It belongs to the synaptotagmin family. As to expression, expressed in brain and kidney.

It localises to the membrane. Functionally, plays a role in dendrite formation by melanocytes. The protein is Synaptotagmin-17 (Syt17) of Rattus norvegicus (Rat).